The primary structure comprises 1483 residues: Cystic fibrosis transmembrane conductance regulator (1483 aa).

The Cytoplasmic portion of the chain corresponds to 1-77; the sequence is MQRSPLEKAS…KLINALRRCF (77 aa). Residues 78-98 traverse the membrane as a helical segment; that stretch reads FWRFAFYGILLYLGEVTKAVQ. Positions 81 to 365 constitute an ABC transmembrane type-1 1 domain; that stretch reads FAFYGILLYL…WAVQTWYDSL (285 aa). The Extracellular segment spans residues 99–122; it reads PLLLGRIIASYDPDNKQERSIAIY. Residues 123–146 traverse the membrane as a helical segment; the sequence is LAIGLCLLFIMRPLLLHPAIFGLH. Residues 147-195 are Cytoplasmic-facing; sequence HIGMQIRIAMFSLIYKKTLKLSSRVLDKISIGQLVSLLSNNLNKFDEGL. The chain crosses the membrane as a helical span at residues 196-216; it reads ALAHFVWIAPLQVTLLMGLLW. At 217-222 the chain is on the extracellular side; it reads DLLQAS. Residues 223–243 traverse the membrane as a helical segment; sequence AFCGLAFLIVLALVQAGLGRM. Over 244-298 the chain is Cytoplasmic; sequence IMKYRDQRAGKINERLVITSEVIENIQSVKAYCWEEAMEKIIENIRQTELKLTRK. A helical transmembrane segment spans residues 299-319; that stretch reads AAHVRYFNSSAFFFSGFFVVS. Residues 320–339 lie on the Extracellular side of the membrane; the sequence is LSVLPYALIKTIILRKIFTT. The helical transmembrane segment at 340-358 threads the bilayer; it reads ISFCIVLRMAVTRQFPWAV. Residues 359–859 lie on the Cytoplasmic side of the membrane; it reads QTWYDSLGAI…YLRYITVHKN (501 aa). ATP is bound by residues tryptophan 401, serine 434, 458-465, and glutamine 493; that span reads GSTGAGKT. The ABC transporter 1 domain occupies 423-646; the sequence is NGDNSLFFSN…RPDFSSKLMG (224 aa). Cysteine 524 carries S-palmitoyl cysteine lipidation. Serine 549 and serine 660 each carry phosphoserine. The segment at 654–832 is disordered R region; the sequence is SPERRNSIIT…EEINEEDLKE (179 aa). Serine 670 is subject to Phosphoserine; by PKA. Serine 686 is subject to Phosphoserine. Lysine 688 is covalently cross-linked (Glycyl lysine isopeptide (Lys-Gly) (interchain with G-Cter in ubiquitin)). 2 positions are modified to phosphoserine: serine 700 and serine 712. At threonine 717 the chain carries Phosphothreonine. A phosphoserine mark is found at serine 737, serine 768, serine 791, serine 796, and serine 814. A helical transmembrane segment spans residues 860-880; sequence LIFVLIWCLVIFLAEVAVSLV. The region spanning 860–1156 is the ABC transmembrane type-1 2 domain; sequence LIFVLIWCLV…AVNSSIEVDS (297 aa). The Extracellular segment spans residues 881 to 919; it reads VLWILRNLSSQDKGNSTQSVNSSYAVIFTSTSAYYIFYI. N-linked (GlcNAc...) asparagine glycans are attached at residues asparagine 887, asparagine 895, and asparagine 901. Residues 920–940 traverse the membrane as a discontinuously helical segment; sequence YVGVADTLLALGLFRGLPLVH. Over 941 to 991 the chain is Cytoplasmic; sequence TLITVSKILHHKMLHSVLQAPMSTLNTLKAGGILNRFSKDIAILDDLLPLT. A helical transmembrane segment spans residues 992–1012; sequence IFDFIQLLLIVIGAVAVVSVL. The Extracellular segment spans residues 1013-1014; sequence QP. Residues 1015–1035 form a helical membrane-spanning segment; sequence YIFLATVPVIAAFIILRAYFL. At 1036 to 1096 the chain is on the cytoplasmic side; that stretch reads HTSQQLKQLE…TANWFLYLST (61 aa). Residues 1097-1117 traverse the membrane as a helical segment; sequence LRWFQMRMEIIFVIFFIAVTF. The Extracellular segment spans residues 1118–1131; the sequence is ISILTTGEGEGTVG. A helical membrane pass occupies residues 1132-1152; sequence IILTLAMNIMGTLQWAVNSSI. Residues 1153–1483 lie on the Cytoplasmic side of the membrane; that stretch reads EVDSLMRSVS…TEDEVQDTRL (331 aa). Residues 1213-1446 form the ABC transporter 2 domain; it reads MTVKDLTAKY…RSAFRQAIGP (234 aa). Residues tyrosine 1222 and 1247 to 1254 each bind ATP; that span reads GRTGSGKS. Positions 1389–1483 are interaction with GORASP2; it reads RTLKQAFADC…TEDEVQDTRL (95 aa). The S-palmitoyl cysteine moiety is linked to residue cysteine 1398. The tract at residues 1444 to 1483 is disordered; it reads IGPPERPGLLPHRLSSRQRSPSRIAALKEETEDEVQDTRL. Phosphoserine is present on serine 1459. Residues 1473 to 1483 are compositionally biased toward acidic residues; sequence ETEDEVQDTRL. Residues 1481 to 1483 carry the PDZ-binding motif; that stretch reads TRL.

The protein belongs to the ABC transporter superfamily. ABCC family. CFTR transporter (TC 3.A.1.202) subfamily. In terms of assembly, monomer; does not require oligomerization for channel activity. May form oligomers in the membrane. Interacts with SLC26A3, SLC26A6 and NHERF1. Interacts with SHANK2. Interacts with MYO6. Interacts (via C-terminus) with GOPC (via PDZ domain); this promotes CFTR internalization and thereby decreases channel activity. Interacts with SLC4A7 through NHERF1. Found in a complex with MYO5B and RAB11A. Interacts with ANO1. Interacts with SLC26A8. Interacts with AHCYL1; the interaction increases CFTR activity. Interacts with CSE1L. The core-glycosylated form interacts with GORASP2 (via PDZ GRASP-type 1 domain) in respone to ER stress. Interacts with MARCHF2; the interaction leads to CFTR ubiqtuitination and degradation. Interacts with ADGRG2. In terms of processing, N-glycosylated. Phosphorylated; cAMP treatment promotes phosphorylation and activates the channel. Dephosphorylation decreases the ATPase activity (in vitro). Phosphorylation at PKA sites activates the channel. Phosphorylation at PKC sites enhances the response to phosphorylation by PKA. Phosphorylated by AMPK; this inhibits channel activity. Post-translationally, ubiquitinated, leading to its degradation in the lysosome. Deubiquitination by USP10 in early endosomes enhances its endocytic recycling to the cell membrane. Ubiquitinated by RNF185 during ER stress. Ubiquitinated by MARCHF2.

It localises to the apical cell membrane. The protein resides in the early endosome membrane. The protein localises to the cell membrane. Its subcellular location is the recycling endosome membrane. It is found in the endoplasmic reticulum membrane. It localises to the nucleus. It catalyses the reaction ATP + H2O + closed Cl(-) channel = ADP + phosphate + open Cl(-) channel.. The enzyme catalyses chloride(in) = chloride(out). It carries out the reaction hydrogencarbonate(in) = hydrogencarbonate(out). The catalysed reaction is ATP + H2O = ADP + phosphate + H(+). Epithelial ion channel that plays an important role in the regulation of epithelial ion and water transport and fluid homeostasis. Mediates the transport of chloride ions across the cell membrane. Possesses an intrinsic ATPase activity and utilizes ATP to gate its channel; the passive flow of anions through the channel is gated by cycles of ATP binding and hydrolysis by the ATP-binding domains. The ion channel is also permeable to HCO(3)(-); selectivity depends on the extracellular chloride concentration. Exerts its function also by modulating the activity of other ion channels and transporters. Contributes to the regulation of the pH and the ion content of the epithelial fluid layer. Modulates the activity of the epithelial sodium channel (ENaC) complex, in part by regulating the cell surface expression of the ENaC complex. May regulate bicarbonate secretion and salvage in epithelial cells by regulating the transporter SLC4A7. Can inhibit the chloride channel activity of ANO1. Plays a role in the chloride and bicarbonate homeostasis during sperm epididymal maturation and capacitation. The protein is Cystic fibrosis transmembrane conductance regulator of Canis lupus familiaris (Dog).